We begin with the raw amino-acid sequence, 430 residues long: Adenylosuccinate synthetase (430 aa).

GTP contacts are provided by residues 13 to 19 and 41 to 43; these read GDEGKGK and GHT. The active-site Proton acceptor is D14. Mg(2+) contacts are provided by D14 and G41. IMP is bound by residues 14 to 17, 39 to 42, T130, R144, Q225, T240, and R304; these read DEGK and NAGH. Catalysis depends on H42, which acts as the Proton donor. 300–306 serves as a coordination point for substrate; sequence ASTGRPR. GTP-binding positions include R306, 332-334, and 414-416; these read KLD and STG.

This sequence belongs to the adenylosuccinate synthetase family. As to quaternary structure, homodimer. Mg(2+) is required as a cofactor.

It localises to the cytoplasm. The enzyme catalyses IMP + L-aspartate + GTP = N(6)-(1,2-dicarboxyethyl)-AMP + GDP + phosphate + 2 H(+). Its pathway is purine metabolism; AMP biosynthesis via de novo pathway; AMP from IMP: step 1/2. Functionally, plays an important role in the de novo pathway of purine nucleotide biosynthesis. Catalyzes the first committed step in the biosynthesis of AMP from IMP. The polypeptide is Adenylosuccinate synthetase (Xanthomonas campestris pv. campestris (strain 8004)).